A 483-amino-acid chain; its full sequence is MASIRELHQQLIKKERSAVEITTEALDRIEKLEPLLHSFLHITADQALESAKKVDAKIAAKEEIGLLEGIPVGIKDNMCTQGIPTTCGSKILENFVPPYESTVTQKLKDSGAITLGKTNLDEFAMGSSTESSGYQVTANPWDLSRVPGGSSGGSAAAVASEECVVALGSDTGGSIRQPASYCGVVGLKPTYGLVSRFGLVAYASSLDQIGPFARTVEDAAILLGAIAGYDPKDSTSLNVEIPDYTQFLKPKLSKLKIGIIKETFGEGLDPVVADTVNQGVEQLKKLGAKVKEISCPRFRYGLPAYYIIAPSEASANLARYDAVKYGIRKEADTLMSMYTTTRASGFGAEVKRRIMLGTYALSAGYYDAYYLKAQKVRTLIKQDFEQAFEEVDVLVCPTAPTTAFKAGEKTDDPLSMYLSDLMTIPVNLGGLPGMSIPCGFDRLGLPIGMQLISNVLREDLLFQVAYAYEQATDWHKRKPPLPQ.

Residues K75 and S150 each act as charge relay system in the active site. The active-site Acyl-ester intermediate is S174.

The protein belongs to the amidase family. GatA subfamily. In terms of assembly, heterotrimer of A, B and C subunits.

The catalysed reaction is L-glutamyl-tRNA(Gln) + L-glutamine + ATP + H2O = L-glutaminyl-tRNA(Gln) + L-glutamate + ADP + phosphate + H(+). Allows the formation of correctly charged Gln-tRNA(Gln) through the transamidation of misacylated Glu-tRNA(Gln) in organisms which lack glutaminyl-tRNA synthetase. The reaction takes place in the presence of glutamine and ATP through an activated gamma-phospho-Glu-tRNA(Gln). This is Glutamyl-tRNA(Gln) amidotransferase subunit A from Gloeothece citriformis (strain PCC 7424) (Cyanothece sp. (strain PCC 7424)).